Consider the following 155-residue polypeptide: MAKKDKHDDALARNRRASFNYFIGETYEAGIQLTGTEIKSVRLGQITIGDAYITVRDQQAFLNNANISPYKQGNQFNVDPLRRRKLLLHKKEILALDRAVSKEGKTIVPLRVYIVKGFAKILIAIGTGKKNYDKRQTIKERDLKRELGKNLKNFH.

It belongs to the SmpB family.

It is found in the cytoplasm. Its function is as follows. Required for rescue of stalled ribosomes mediated by trans-translation. Binds to transfer-messenger RNA (tmRNA), required for stable association of tmRNA with ribosomes. tmRNA and SmpB together mimic tRNA shape, replacing the anticodon stem-loop with SmpB. tmRNA is encoded by the ssrA gene; the 2 termini fold to resemble tRNA(Ala) and it encodes a 'tag peptide', a short internal open reading frame. During trans-translation Ala-aminoacylated tmRNA acts like a tRNA, entering the A-site of stalled ribosomes, displacing the stalled mRNA. The ribosome then switches to translate the ORF on the tmRNA; the nascent peptide is terminated with the 'tag peptide' encoded by the tmRNA and targeted for degradation. The ribosome is freed to recommence translation, which seems to be the essential function of trans-translation. This chain is SsrA-binding protein, found in Oenococcus oeni (strain ATCC BAA-331 / PSU-1).